The following is a 92-amino-acid chain: Large ribosomal subunit protein eL31 (92 aa).

It belongs to the eukaryotic ribosomal protein eL31 family.

The protein is Large ribosomal subunit protein eL31 of Pyrobaculum arsenaticum (strain DSM 13514 / JCM 11321 / PZ6).